Reading from the N-terminus, the 147-residue chain is MSDQHNLKEQLCFSLYNAQRQVNRYYSNKVFKKYNLTYPQFLVLTILWDESPVNVKKVVTELALDTGTVSPLLKRMEQVDLIKRERSEVDQREVFIHLTDKSETIRPELSNASDKVASASSLSQDEVKELNRLLGKVIHAFDETKEK.

The region spanning 8–139 (KEQLCFSLYN…LNRLLGKVIH (132 aa)) is the HTH marR-type domain. A DNA-binding region (H-T-H motif) is located at residues 55 to 78 (VKKVVTELALDTGTVSPLLKRMEQ).

It is found in the cytoplasm. Its function is as follows. Regulatory protein involved in autolytic activity, multidrug resistance and virulence. Controls autolysis by inactivating LytM, LytN (autolysins) and SarV (autolysis activator) and activating ArlRS, LrgAB and LytSR (autolysis inhibitors). Acts as a dual regulator for resistance to multiple drugs by inactivating NorB and tet38 and activating NorA. Positively controls the expression of virulence accessory gene regulator (agr) to promote alpha-hemolysin (hla) transcription and down-regulates staphylococcal accessory regulator (sarS), leading to repression of surface protein A (spa). Binds directly to hla promoter to augment its activation. Binds to sarS promoter to down-regulate spa expression. The polypeptide is HTH-type transcriptional regulator MgrA (mgrA) (Staphylococcus aureus (strain NCTC 8325 / PS 47)).